The following is a 182-amino-acid chain: Cell wall protein phiA (182 aa).

Positions 1-18 are cleaved as a signal peptide; sequence MKLTSTAALASLAVAATA. N-linked (GlcNAc...) asparagine glycans are attached at residues Asn57 and Asn107.

This sequence belongs to the phiA family. In terms of tissue distribution, mainly present in phialides and conidia.

It is found in the secreted. The protein localises to the cell wall. Functionally, cell wall protein involved in development of asexual structures such as phialide and conidium development, and thus required for spore formation. Plays a role as a general stress protectant produced by the fungus in competition with antagonistic bacteria. The sequence is that of Cell wall protein phiA from Emericella nidulans (strain FGSC A4 / ATCC 38163 / CBS 112.46 / NRRL 194 / M139) (Aspergillus nidulans).